The sequence spans 491 residues: UDP-N-acetylmuramate--L-alanine ligase (491 aa).

126–132 lines the ATP pocket; that stretch reads GTHGKTT.

Belongs to the MurCDEF family.

The protein resides in the cytoplasm. It carries out the reaction UDP-N-acetyl-alpha-D-muramate + L-alanine + ATP = UDP-N-acetyl-alpha-D-muramoyl-L-alanine + ADP + phosphate + H(+). It functions in the pathway cell wall biogenesis; peptidoglycan biosynthesis. Cell wall formation. The chain is UDP-N-acetylmuramate--L-alanine ligase from Escherichia coli (strain SE11).